The chain runs to 438 residues: Transmembrane protein 184C (438 aa).

Transmembrane regions (helical) follow at residues 17–37 (LVAV…VWEL), 48–68 (AWFI…WVIL), 86–106 (ILWM…YPGI), 179–199 (YTVV…LGIY), 212–232 (YLVI…LLFY), 254–274 (VVFV…VGVI), and 287–307 (AVAT…AAIA). The segment at 355-438 (RGHPRKKLFP…KEPSDKSVDS (84 aa)) is disordered. Composition is skewed to low complexity over residues 374 to 390 (SLLS…ASSM) and 404 to 413 (TVTPQTTPTT). Serine 422 is modified (phosphoserine). The span at 425 to 438 (IGEKKEPSDKSVDS) shows a compositional bias: basic and acidic residues.

The protein belongs to the TMEM184 family. As to expression, widely expressed with higher expression in lung, kidney, spleen, pancreas, thymus, prostate, testis, ovary, small intestine and thyroid.

Its subcellular location is the membrane. Functionally, possible tumor suppressor which may play a role in cell growth. The chain is Transmembrane protein 184C (TMEM184C) from Homo sapiens (Human).